Consider the following 608-residue polypeptide: Mitogen-activated protein kinase kinase kinase 1 (608 aa).

The segment covering 1–13 has biased composition (basic residues); it reads MDRILARMKKSTG. The disordered stretch occupies residues 1–20; it reads MDRILARMKKSTGRRGGDKN. Residues 1–325 form a regulatory region region; it reads MDRILARMKK…VSNTSPIYPD (325 aa). Residue Ser62 is modified to Phosphoserine. The segment at 192–234 is binding with MPK4; sequence MERTPTIVKSKGYLVPNNVVAVGVGVGGGIKGLRPPVLKPPPA. 2 disordered regions span residues 228–247 and 256–287; these read VLKPPPAMKRPPIDHRGSSW and SETVKRPSSSSSSSEDGCDEEEGKEEEAEAEE. The segment covering 271–287 has biased composition (acidic residues); it reads DGCDEEEGKEEEAEAEE. Residues 333–587 enclose the Protein kinase domain; the sequence is WQKGQLLGRG…AAELLNHPFV (255 aa). ATP-binding positions include 339-347 and Lys361; that span reads LGRGSFGSV. Residue Asp456 is the Proton acceptor of the active site. Position 603 is a phosphoserine (Ser603).

Belongs to the protein kinase superfamily. STE Ser/Thr protein kinase family. MAP kinase kinase kinase subfamily. In terms of assembly, interacts with MKK1, MMK2 and MPK4. May form a ternary complex composed of MEKK1 and MKK1/MKK2 and MPK4. Interacts with RACK1A, RACK1B and RACK1C. Binds to CRLK1. Phosphorylated by CRLK1 in response to cold.

It localises to the cell membrane. The protein resides in the endosome. The catalysed reaction is L-seryl-[protein] + ATP = O-phospho-L-seryl-[protein] + ADP + H(+). It catalyses the reaction L-threonyl-[protein] + ATP = O-phospho-L-threonyl-[protein] + ADP + H(+). With respect to regulation, activated by cold via CRLK1-mediated phosphorylation and leading to elevated kinase activity towards MKK2. Its function is as follows. The MEKK1, MKK1/MKK2 and MPK4 function in a signaling pathway that modulates the expression of genes responding to biotic and abiotic stresses and also plays an important role in pathogen defense by negatively regulating innate immunity. Involved in the innate immune MAP kinase signaling cascade (MEKK1, MKK4/MKK5 and MPK3/MPK6) downstream of bacterial flagellin receptor FLS2. May be involved in the cold and salinity stress-mediated MAP kinase signaling cascade (MEKK1, MKK1/MKK2 and MPK4/MPK6). Activates by phosphorylation the downstream MKK2, MKK4 and MKK5 in a calcium-dependent manner. The chain is Mitogen-activated protein kinase kinase kinase 1 (MEKK1) from Arabidopsis thaliana (Mouse-ear cress).